A 616-amino-acid polypeptide reads, in one-letter code: Dihydroxy-acid dehydratase (616 aa).

Residue Asp81 participates in Mg(2+) binding. Cys122 contributes to the [2Fe-2S] cluster binding site. Residues Asp123 and Lys124 each contribute to the Mg(2+) site. At Lys124 the chain carries N6-carboxylysine. Residue Cys195 participates in [2Fe-2S] cluster binding. Glu491 provides a ligand contact to Mg(2+). Residue Ser517 is the Proton acceptor of the active site.

Belongs to the IlvD/Edd family. In terms of assembly, homodimer. [2Fe-2S] cluster is required as a cofactor. Requires Mg(2+) as cofactor.

The catalysed reaction is (2R)-2,3-dihydroxy-3-methylbutanoate = 3-methyl-2-oxobutanoate + H2O. It catalyses the reaction (2R,3R)-2,3-dihydroxy-3-methylpentanoate = (S)-3-methyl-2-oxopentanoate + H2O. It participates in amino-acid biosynthesis; L-isoleucine biosynthesis; L-isoleucine from 2-oxobutanoate: step 3/4. Its pathway is amino-acid biosynthesis; L-valine biosynthesis; L-valine from pyruvate: step 3/4. Functionally, functions in the biosynthesis of branched-chain amino acids. Catalyzes the dehydration of (2R,3R)-2,3-dihydroxy-3-methylpentanoate (2,3-dihydroxy-3-methylvalerate) into 2-oxo-3-methylpentanoate (2-oxo-3-methylvalerate) and of (2R)-2,3-dihydroxy-3-methylbutanoate (2,3-dihydroxyisovalerate) into 2-oxo-3-methylbutanoate (2-oxoisovalerate), the penultimate precursor to L-isoleucine and L-valine, respectively. The chain is Dihydroxy-acid dehydratase from Klebsiella pneumoniae subsp. pneumoniae (strain ATCC 700721 / MGH 78578).